The chain runs to 155 residues: Ribonuclease H (155 aa).

One can recognise an RNase H type-1 domain in the interval 4-146 (NIDVVEIYTD…CDRLATEQIK (143 aa)). Mg(2+) is bound by residues D13, E51, D73, and D138.

This sequence belongs to the RNase H family. In terms of assembly, monomer. It depends on Mg(2+) as a cofactor.

Its subcellular location is the cytoplasm. It carries out the reaction Endonucleolytic cleavage to 5'-phosphomonoester.. Functionally, endonuclease that specifically degrades the RNA of RNA-DNA hybrids. The sequence is that of Ribonuclease H from Thermoanaerobacter pseudethanolicus (strain ATCC 33223 / 39E) (Clostridium thermohydrosulfuricum).